We begin with the raw amino-acid sequence, 1493 residues long: Myosin-13 (1493 aa).

Positions 18–67 constitute a Myosin N-terminal SH3-like domain; it reads KVGSIVWVQDPEEAWIDGEVVEVNGEDIKVQCTSGKTVVAKGSNTYPKDM. A Myosin motor domain is found at 72–741; the sequence is SGVDDMTTLA…QMAELDDRRT (670 aa). Residues 166 to 173 and 219 to 227 each bind ATP; these read GESGAGKT and NNNSSRFGK. 4 actin-binding regions span residues 504-538, 540-563, 598-622, and 622-644; these read LIEKKRGGIIALLDEACMFPRSTHKTFSQKLYETL, DNKYFSKPKLSRTDFTICHYAGDV, FPPLVEDANKQSKFSSIASQFKQQL, and LASLIEGLNTTEPHYIRCVKPNN. IQ domains follow at residues 744-773, 767-796, 792-821, 813-842, 836-865, and 859-888; these read LGRAACIIQWKFRSYLTRQSFIMLRNAAIN, LRNAAINIQAVYRGQVARYRFENLRREAAA, REAAALKIQRALRIHLDRKRSYIEAVVTVQ, YIEAVVTVQSGLRGMAARVVLRRKTKATTV, KTKATTVIQSHCRRLRAELHYKKLKKAAIT, and LKKAAITTQSAWRARLARKELRKLKTDARD. Positions 889 to 1057 form a coiled coil; sequence TVVLQAAKSM…NFLKESVLTT (169 aa). The interval 1085 to 1114 is disordered; that stretch reads QLSGAEFTTPPRIQESGSDTKSRGSHIDPQ. Over residues 1102 to 1114 the composition is skewed to basic and acidic residues; that stretch reads SDTKSRGSHIDPQ. Positions 1161–1444 constitute a Dilute domain; it reads DRLVQMIGSA…IASMTGVMTD (284 aa).

It belongs to the TRAFAC class myosin-kinesin ATPase superfamily. Myosin family. Plant myosin class XI subfamily. In terms of assembly, homodimer.

Myosin heavy chain that is required for the cell cycle-regulated transport of various organelles and proteins for their segregation. Functions by binding with its tail domain to receptor proteins on organelles and exerting force with its N-terminal motor domain against actin filaments, thereby transporting its cargo along polarized actin cables. In Arabidopsis thaliana (Mouse-ear cress), this protein is Myosin-13 (XI-G).